We begin with the raw amino-acid sequence, 93 residues long: Sec-independent protein translocase protein TatA (93 aa).

The helical transmembrane segment at 1–21 (MGSLSPWHWAILAVVVILLFG) threads the bilayer. Positions 45–93 (EMQSENKTETSALGAQSESSAANPTPVQSQRVDPPAPSEQGHSEARPAS) are disordered. Positions 53–75 (ETSALGAQSESSAANPTPVQSQR) are enriched in polar residues.

This sequence belongs to the TatA/E family. In terms of assembly, the Tat system comprises two distinct complexes: a TatABC complex, containing multiple copies of TatA, TatB and TatC subunits, and a separate TatA complex, containing only TatA subunits. Substrates initially bind to the TatABC complex, which probably triggers association of the separate TatA complex to form the active translocon.

The protein resides in the cell membrane. Functionally, part of the twin-arginine translocation (Tat) system that transports large folded proteins containing a characteristic twin-arginine motif in their signal peptide across membranes. TatA could form the protein-conducting channel of the Tat system. The polypeptide is Sec-independent protein translocase protein TatA (Mycolicibacterium paratuberculosis (strain ATCC BAA-968 / K-10) (Mycobacterium paratuberculosis)).